Consider the following 551-residue polypeptide: Glucan 1,4-alpha-maltotetraohydrolase (551 aa).

Positions 1-21 are cleaved as a signal peptide; it reads MSHILRAAVLAAVLLPFPALA. Residues Asp-22, Gln-23, His-34, Asp-37, and Glu-38 each contribute to the Ca(2+) site. Substrate is bound at residue 99–100; that stretch reads YF. Asn-137 contributes to the Ca(2+) binding site. His-138 provides a ligand contact to substrate. Cys-161 and Cys-171 are disulfide-bonded. Asp-172 and Asp-175 together coordinate Ca(2+). 177–181 serves as a coordination point for substrate; it reads FIGGE. Ca(2+) is bound at residue Asp-183. Arg-212 lines the substrate pocket. Catalysis depends on Asp-214, which acts as the Nucleophile. Gly-218 provides a ligand contact to Ca(2+). A disulfide bridge links Cys-237 with Cys-272. Glu-240 (proton donor) is an active-site residue. Residues His-314 and Gln-326 each coordinate substrate. The CBM20 domain maps to 449–551; that stretch reads GGEGGLVNVN…AAGASTSGSF (103 aa).

It belongs to the glycosyl hydrolase 13 family. Monomer. The cofactor is Ca(2+).

It is found in the secreted. It catalyses the reaction Hydrolysis of (1-&gt;4)-alpha-D-glucosidic linkages in amylaceous polysaccharides, to remove successive maltotetraose residues from the non-reducing chain ends.. The protein operates within glycan degradation; starch degradation. This Roseateles saccharophilus (Pseudomonas saccharophila) protein is Glucan 1,4-alpha-maltotetraohydrolase (mta).